The sequence spans 749 residues: Putative Xaa-Pro aminopeptidase FRA1 (749 aa).

Positions 1–33 (MTSKPSTSDGRAHSISHVPGTHMRGTSASHSPR) are disordered. 3 positions are modified to phosphoserine: S69, S92, and S95. Residues D551, D562, E660, and E674 each coordinate Mn(2+).

The protein belongs to the peptidase M24B family. As to quaternary structure, homodimer. Interacts with FRA2. Requires Mn(2+) as cofactor.

Its subcellular location is the cytoplasm. The enzyme catalyses Release of any N-terminal amino acid, including proline, that is linked to proline, even from a dipeptide or tripeptide.. Its function is as follows. Involved in the regulation of the iron regulon in responss to decreased mitochondrial iron-sulfur cluster synthesis. The chain is Putative Xaa-Pro aminopeptidase FRA1 (FRA1) from Saccharomyces cerevisiae (strain ATCC 204508 / S288c) (Baker's yeast).